Here is a 608-residue protein sequence, read N- to C-terminus: Coilin (608 aa).

The interval 134-272 is disordered; that stretch reads KETGGYESES…RKKAKRQWLR (139 aa). The span at 141–155 shows a compositional bias: acidic residues; that stretch reads SESEEDELEEEAEEF. Residues 161 to 179 show a composition bias toward basic residues; the sequence is ASKKRKTSSKNQSTKRKKC. Residues 163–170 carry the Nuclear localization signal 1 motif; sequence KKRKTSSK. Ser-187 is subject to Phosphoserine. Residues 211-228 are compositionally biased toward polar residues; that stretch reads DVQSANNDEQNNDSTKPM. The span at 235 to 245 shows a compositional bias: basic and acidic residues; that stretch reads SQQEESKEHND. The Nuclear localization signal 2 signature appears at 253 to 260; that stretch reads TKKTPSRS. Residues 256 to 269 show a composition bias toward basic residues; sequence TPSRSARRKKAKRQ. A Tudor; atypical domain is found at 410–510; sequence YEQLVAYTGS…LLDVRSVKTS (101 aa). The segment at 513–585 is disordered; it reads DSAEVAKSAL…KKGSSSGGSW (73 aa). Residues 558–585 show a composition bias toward low complexity; that stretch reads EALSAKKAALSQANNGWNKKGSSSGGSW.

It belongs to the coilin family. As to quaternary structure, homooligomer. Interaction with RNA results in multimerization due to structural alteration in the NOD domain.

Its subcellular location is the nucleus. It is found in the cajal body. In terms of biological role, probable component of nuclear coiled bodies, also known as Cajal bodies or CBs, which are involved in the modification and assembly of nucleoplasmic snRNPs. Required for CBs formation. Binds snRNAs and non-specific artificial RNA via the N-terminal part of the NOD domain and via the NLS2 region (212-282) of the IDD domain. The two sites are able to function independently and provide effective RNA-binding in a non-cooperative manner. The sequence is that of Coilin from Arabidopsis thaliana (Mouse-ear cress).